The chain runs to 210 residues: Urease accessory protein UreG (210 aa).

Residue 14-21 (GPVGSGKT) coordinates GTP.

Belongs to the SIMIBI class G3E GTPase family. UreG subfamily. In terms of assembly, homodimer. UreD, UreF and UreG form a complex that acts as a GTP-hydrolysis-dependent molecular chaperone, activating the urease apoprotein by helping to assemble the nickel containing metallocenter of UreC. The UreE protein probably delivers the nickel.

It localises to the cytoplasm. Its function is as follows. Facilitates the functional incorporation of the urease nickel metallocenter. This process requires GTP hydrolysis, probably effectuated by UreG. This is Urease accessory protein UreG from Rhodopseudomonas palustris (strain BisB5).